Consider the following 250-residue polypeptide: Aliphatic sulfonates import ATP-binding protein SsuB 2 (250 aa).

The ABC transporter domain occupies 13-229 (VRLQGLTRSF…SYRDPLLGEY (217 aa)). 45-52 (GHSGSGKS) contributes to the ATP binding site.

The protein belongs to the ABC transporter superfamily. Aliphatic sulfonates importer (TC 3.A.1.17.2) family. The complex is composed of two ATP-binding proteins (SsuB), two transmembrane proteins (SsuC) and a solute-binding protein (SsuA).

It is found in the cell membrane. The enzyme catalyses ATP + H2O + aliphatic sulfonate-[sulfonate-binding protein]Side 1 = ADP + phosphate + aliphatic sulfonateSide 2 + [sulfonate-binding protein]Side 1.. In terms of biological role, part of the ABC transporter complex SsuABC involved in aliphatic sulfonates import. Responsible for energy coupling to the transport system. The sequence is that of Aliphatic sulfonates import ATP-binding protein SsuB 2 from Streptomyces avermitilis (strain ATCC 31267 / DSM 46492 / JCM 5070 / NBRC 14893 / NCIMB 12804 / NRRL 8165 / MA-4680).